Consider the following 631-residue polypeptide: Phosphomethylpyrimidine synthase (631 aa).

Residues N239, M268, Y297, H333, S353–G355, D394–R397, and E433 contribute to the substrate site. H437 is a Zn(2+) binding site. Y460 contributes to the substrate binding site. H501 contacts Zn(2+). C581, C584, and C589 together coordinate [4Fe-4S] cluster.

Belongs to the ThiC family. As to quaternary structure, homodimer. [4Fe-4S] cluster serves as cofactor.

The enzyme catalyses 5-amino-1-(5-phospho-beta-D-ribosyl)imidazole + S-adenosyl-L-methionine = 4-amino-2-methyl-5-(phosphooxymethyl)pyrimidine + CO + 5'-deoxyadenosine + formate + L-methionine + 3 H(+). The protein operates within cofactor biosynthesis; thiamine diphosphate biosynthesis. In terms of biological role, catalyzes the synthesis of the hydroxymethylpyrimidine phosphate (HMP-P) moiety of thiamine from aminoimidazole ribotide (AIR) in a radical S-adenosyl-L-methionine (SAM)-dependent reaction. In Salmonella typhi, this protein is Phosphomethylpyrimidine synthase.